A 454-amino-acid chain; its full sequence is Light-independent protochlorophyllide reductase subunit N (454 aa).

[4Fe-4S] cluster contacts are provided by C22, C47, and C107.

Belongs to the BchN/ChlN family. In terms of assembly, protochlorophyllide reductase is composed of three subunits; ChlL, ChlN and ChlB. Forms a heterotetramer of two ChlB and two ChlN subunits. [4Fe-4S] cluster serves as cofactor.

The protein localises to the plastid. The protein resides in the chloroplast. The catalysed reaction is chlorophyllide a + oxidized 2[4Fe-4S]-[ferredoxin] + 2 ADP + 2 phosphate = protochlorophyllide a + reduced 2[4Fe-4S]-[ferredoxin] + 2 ATP + 2 H2O. It functions in the pathway porphyrin-containing compound metabolism; chlorophyll biosynthesis (light-independent). Component of the dark-operative protochlorophyllide reductase (DPOR) that uses Mg-ATP and reduced ferredoxin to reduce ring D of protochlorophyllide (Pchlide) to form chlorophyllide a (Chlide). This reaction is light-independent. The NB-protein (ChlN-ChlB) is the catalytic component of the complex. The protein is Light-independent protochlorophyllide reductase subunit N of Cycas taitungensis (Prince sago).